The following is a 70-amino-acid chain: Large ribosomal subunit protein bL31 (70 aa).

Positions 16, 18, 37, and 40 each coordinate Zn(2+).

This sequence belongs to the bacterial ribosomal protein bL31 family. Type A subfamily. As to quaternary structure, part of the 50S ribosomal subunit. Zn(2+) is required as a cofactor.

Its function is as follows. Binds the 23S rRNA. The protein is Large ribosomal subunit protein bL31 of Shewanella amazonensis (strain ATCC BAA-1098 / SB2B).